Here is a 146-residue protein sequence, read N- to C-terminus: D-aminoacyl-tRNA deacylase (146 aa).

Positions 137-138 (GP) match the Gly-cisPro motif, important for rejection of L-amino acids motif.

It belongs to the DTD family. In terms of assembly, homodimer.

The protein resides in the cytoplasm. It carries out the reaction glycyl-tRNA(Ala) + H2O = tRNA(Ala) + glycine + H(+). It catalyses the reaction a D-aminoacyl-tRNA + H2O = a tRNA + a D-alpha-amino acid + H(+). Functionally, an aminoacyl-tRNA editing enzyme that deacylates mischarged D-aminoacyl-tRNAs. Also deacylates mischarged glycyl-tRNA(Ala), protecting cells against glycine mischarging by AlaRS. Acts via tRNA-based rather than protein-based catalysis; rejects L-amino acids rather than detecting D-amino acids in the active site. By recycling D-aminoacyl-tRNA to D-amino acids and free tRNA molecules, this enzyme counteracts the toxicity associated with the formation of D-aminoacyl-tRNA entities in vivo and helps enforce protein L-homochirality. The chain is D-aminoacyl-tRNA deacylase from Bacillus cereus (strain ATCC 14579 / DSM 31 / CCUG 7414 / JCM 2152 / NBRC 15305 / NCIMB 9373 / NCTC 2599 / NRRL B-3711).